The following is a 159-amino-acid chain: Short coiled-coil protein (159 aa).

Residues 78-146 (MMNADMDAVD…QYIENLMSAS (69 aa)) adopt a coiled-coil conformation.

The protein belongs to the SCOC family. Homodimer. Interacts with ARL1, ARL2 and ARL3. Directly interacts with FEZ1 and UVRAG. The interaction with UVRAG is reduced by amino acid starvation, but the complex is stabilized in the presence of FEZ1. Interacts with NRBF2. As to expression, widely expressed with highest levels in brain, heart and skeletal muscle.

The protein localises to the golgi apparatus membrane. It is found in the golgi apparatus. It localises to the trans-Golgi network. The protein resides in the cytoplasm. Its subcellular location is the cytosol. Functionally, positive regulator of amino acid starvation-induced autophagy. This chain is Short coiled-coil protein (SCOC), found in Homo sapiens (Human).